The following is a 167-amino-acid chain: MRCGPLCRFLWLWPYLSYIEAVPIRKVQDDTKTLIKTIVTRINDISHTQAVSSKQRVAGLDFIPGLHPVLSLSRMDQTLAIYQQILTSLHSRNVVQISNDLENLRDLLHLLASSKSCPLPRARGLESFESLGGVLEASLYSTEVVALSRLQAALQDMLRRLDLSPGC.

The N-terminal stretch at 1 to 21 (MRCGPLCRFLWLWPYLSYIEA) is a signal peptide. A disulfide bond links cysteine 117 and cysteine 167.

It belongs to the leptin family.

The protein localises to the secreted. Functionally, key player in the regulation of energy balance and body weight control. Once released into the circulation, has central and peripheral effects by binding LEPR, found in many tissues, which results in the activation of several major signaling pathways. In the hypothalamus, acts as an appetite-regulating factor that induces a decrease in food intake and an increase in energy consumption by inducing anorexinogenic factors and suppressing orexigenic neuropeptides, also regulates bone mass and secretion of hypothalamo-pituitary-adrenal hormones. In the periphery, increases basal metabolism, influences reproductive function, regulates pancreatic beta-cell function and insulin secretion, is pro-angiogenic for endothelial cell and affects innate and adaptive immunity. In the arcuate nucleus of the hypothalamus, activates by depolarization POMC neurons inducing FOS and SOCS3 expression to release anorexigenic peptides and inhibits by hyperpolarization NPY neurons inducing SOCS3 with a consequent reduction on release of orexigenic peptides. In addition to its known satiety inducing effect, has a modulatory role in nutrient absorption. In the intestine, reduces glucose absorption by enterocytes by activating PKC and leading to a sequential activation of p38, PI3K and ERK signaling pathways which exerts an inhibitory effect on glucose absorption. Acts as a growth factor on certain tissues, through the activation of different signaling pathways increases expression of genes involved in cell cycle regulation such as CCND1, via JAK2-STAT3 pathway, or VEGFA, via MAPK1/3 and PI3K-AKT1 pathways. May also play an apoptotic role via JAK2-STAT3 pathway and up-regulation of BIRC5 expression. Pro-angiogenic, has mitogenic activity on vascular endothelial cells and plays a role in matrix remodeling by regulating the expression of matrix metalloproteinases (MMPs) and tissue inhibitors of metalloproteinases (TIMPs). In innate immunity, modulates the activity and function of neutrophils by increasing chemotaxis and the secretion of oxygen radicals. Increases phagocytosis by macrophages and enhances secretion of pro-inflammatory mediators. Increases cytotoxic ability of NK cells. Plays a pro-inflammatory role, in synergy with IL1B, by inducing NOS2 which promotes the production of IL6, IL8 and Prostaglandin E2, through a signaling pathway that involves JAK2, PI3K, MAP2K1/MEK1 and MAPK14/p38. In adaptive immunity, promotes the switch of memory T-cells towards T helper-1 cell immune responses. Increases CD4(+)CD25(-) T-cell proliferation and reduces autophagy during TCR (T-cell receptor) stimulation, through MTOR signaling pathway activation and BCL2 up-regulation. This Ursus thibetanus (Asiatic black bear) protein is Leptin (LEP).